Here is a 664-residue protein sequence, read N- to C-terminus: RBBP8 N-terminal-like protein (664 aa).

The segment covering 125-140 (LRGLGDRPKPRAKEGT) has biased composition (basic and acidic residues). Disordered stretches follow at residues 125–284 (LRGL…KLSP) and 369–664 (RAGS…WEET). Residues 241-255 (GTPPPLPARSSPPSP) show a composition bias toward pro residues. The segment covering 437-454 (ALDKPLDLSEWGRARGQD) has biased composition (basic and acidic residues). The segment covering 481-496 (SGPLTRSPQALSNGTK) has biased composition (polar residues). Residues 516–528 (LPGSQLSLSSPGS) show a composition bias toward low complexity. Over residues 537–552 (PLPPPHPQPPPHPQPP) the composition is skewed to pro residues. A compositionally biased stretch (basic and acidic residues) spans 554–570 (LDGHPEPSKAEVLRPES). The segment covering 584–597 (GLSSQAEATTSTTG) has biased composition (polar residues). Residues 628-637 (KKPSRGRRKL) are compositionally biased toward basic residues. The span at 654 to 664 (PSPNSSPWEET) shows a compositional bias: polar residues.

In Homo sapiens (Human), this protein is RBBP8 N-terminal-like protein (RBBP8NL).